Reading from the N-terminus, the 567-residue chain is Urease subunit alpha (567 aa).

In terms of domain architecture, Urease spans glycine 129–phenylalanine 567. Ni(2+) is bound by residues histidine 134, histidine 136, and lysine 217. Lysine 217 bears the N6-carboxylysine mark. Histidine 219 is a binding site for substrate. Ni(2+)-binding residues include histidine 246 and histidine 272. Histidine 320 functions as the Proton donor in the catalytic mechanism. Aspartate 360 contributes to the Ni(2+) binding site.

The protein belongs to the metallo-dependent hydrolases superfamily. Urease alpha subunit family. As to quaternary structure, heterotrimer of UreA (gamma), UreB (beta) and UreC (alpha) subunits. Three heterotrimers associate to form the active enzyme. Ni cation is required as a cofactor. In terms of processing, carboxylation allows a single lysine to coordinate two nickel ions.

It localises to the cytoplasm. It catalyses the reaction urea + 2 H2O + H(+) = hydrogencarbonate + 2 NH4(+). It participates in nitrogen metabolism; urea degradation; CO(2) and NH(3) from urea (urease route): step 1/1. The sequence is that of Urease subunit alpha from Alteromonas mediterranea (strain DSM 17117 / CIP 110805 / LMG 28347 / Deep ecotype).